The chain runs to 605 residues: MAHSQVAYLIPLKADLKEDNSSPRITLSEGPNIIGRGNVSIVDKRLSRKHITIIVSTSGSASLSVDGTNPVVIRSSGDGERKKVKPSEEVSVCNDDLIELIPGHHFFKLVLLNGRAAKKARKAEDDVEAIRRFCPPNEKLPSTFRLLSVDALPDWANTSCVSINDVIEGDVVAAILSNYMVDIDWLMSACPKLANIPQVMVIHGEGDGRQEYIQRKKPANWILHKPRLPISFGTHHSKAIFLVYPRGVRVVVHTANLIHVDWNNKSQGLWMQDFPWKDDDKDPPKGCGFEGDLIDYLNVLKWPEFTANLPGRGNVKINAAFFKKFDYSDATVRLIASVPGYHTGFNLNKWGHMKLRTILQECIFDREFRRSPLIYQFSSLGSLDEKWLAEFGNSLSSGITEDKTPLGPGDSLIIWPTVEDVRCSLEGYAAGNAIPSPLKNVEKPFLKKYWARWKADHSARGRAMPHIKTFTRYNDQKIAWFLLTSSNLSKAAWGALQKNNSQLMIRSYELGVLFLPSPIKTQGCVFSCTESNPSVMKAKQETKDEVEKRSKLVTMTWQGDRDLPEIISLPVPYQLPPKPYSPEDVPWSWDRGYSKKDVYGQVWPR.

Residues 81–86 (RKKVKP) carry the Nuclear localization signal motif. H236 (nucleophile) is an active-site residue. K238 serves as a coordination point for substrate. The interaction with DNA stretch occupies residues 379-382 (SLGS). H466 acts as the Proton donor/acceptor in catalysis. K468 is a substrate binding site.

Belongs to the tyrosyl-DNA phosphodiesterase family. In terms of tissue distribution, ubiquitous, with a low level in roots.

Its subcellular location is the nucleus. With respect to regulation, inhibited by vanadate analogs. DNA repair enzyme that can remove a variety of covalent adducts from DNA through hydrolysis of a 3'-phosphodiester bond, giving rise to DNA with a free 3' phosphate. Catalyzes the hydrolysis of dead-end complexes between DNA and the topoisomerase I active site tyrosine residue. This Arabidopsis thaliana (Mouse-ear cress) protein is Tyrosyl-DNA phosphodiesterase 1.